Reading from the N-terminus, the 103-residue chain is Large ribosomal subunit protein bL21 (103 aa).

This sequence belongs to the bacterial ribosomal protein bL21 family. As to quaternary structure, part of the 50S ribosomal subunit. Contacts protein L20.

This protein binds to 23S rRNA in the presence of protein L20. The polypeptide is Large ribosomal subunit protein bL21 (Delftia acidovorans (strain DSM 14801 / SPH-1)).